The chain runs to 607 residues: CUB and zona pellucida-like domain-containing protein 1 (607 aa).

An N-terminal signal peptide occupies residues 1-19 (MEVTGRLFIWAILAVSCRA). Over 20-568 (QLNSTAAEGR…AEISKQPLSH (549 aa)) the chain is Lumenal. An N-linked (GlcNAc...) asparagine glycan is attached at Asn22. The cysteines at positions 32 and 58 are disulfide-linked. 2 CUB domains span residues 32-146 (CTAS…YFFS) and 154-265 (CGGY…YAST). Residue Asn67 is glycosylated (N-linked (GlcNAc...) asparagine). 2 cysteine pairs are disulfide-bonded: Cys85-Cys107 and Cys154-Cys180. An N-linked (GlcNAc...) asparagine glycan is attached at Asn195. The cysteines at positions 207 and 229 are disulfide-linked. Residues 276 to 519 (SCASDKMRVI…SRCNQGCVSR (244 aa)) enclose the ZP domain. Asn419 carries an N-linked (GlcNAc...) asparagine glycan. The cysteines at positions 442 and 498 are disulfide-linked. A helical membrane pass occupies residues 569–589 (LHLFSFMVLALNVVIVVTATV). The Cytoplasmic segment spans residues 590-607 (RHFLNRWKDHGYQKLQVY).

Expressed predominantly in epithelium of uterus and oviduct.

The protein localises to the zymogen granule membrane. Localized to zymogen granules, where it functions in trypsinogen activation. May indirectly regulate cell motility, cell-cell and cell/extracellular matrix interactions. This chain is CUB and zona pellucida-like domain-containing protein 1, found in Rattus norvegicus (Rat).